A 492-amino-acid chain; its full sequence is MSAQDNLTINEKKVLLALEELGSAAPDKLEEKSGLQVDAAMQAAFMLQEKGLASVSEKVLERYSLTKEGEEYTKTGLPERQIIDALKAPAPLEELRSRFSPKTVGIATGWLIKKGWAKVENGVMVPSGNAPAGRDEEVLAAFAGKAKTLEELAADEGTVKELLKRKLVIKHEEKSRTVSVTGAGSALAAEGIVLEEEIAQLTPELLKSGAWKGKKFRPYRLDIAPNPLYGVKIHPYRRLIEQMRQIFLEMGFTEIKGGIIQSSFWNFDALFQPQDHPARDMQDTFHLGSICQLPAEYSDKVAAMHESGGDIDSCGWGGIWDRELARRNVLRTHTTSVTIKYLADNPEPPVKAFCIDRAYRRETIDPTHTPEFEQLEGVVMDKDMSFADLLGLLAEFYHRMGFEEVRFRPGYFPYTEPSVEPEVYVDGLGWVELGGAGVFRKEVTEPFGIKEPVLAWGLGVSRLAMLKLGLKDLRLLYQSDIDWLRKSEVCRI.

L-phenylalanine-binding positions include threonine 335, glutamine 374 to glutamate 376, and tyrosine 414. Glutamate 416 is a binding site for Mg(2+). Phenylalanine 439 contacts L-phenylalanine.

Belongs to the class-II aminoacyl-tRNA synthetase family. Phe-tRNA synthetase alpha subunit type 2 subfamily. In terms of assembly, tetramer of two alpha and two beta subunits. Requires Mg(2+) as cofactor.

The protein localises to the cytoplasm. It carries out the reaction tRNA(Phe) + L-phenylalanine + ATP = L-phenylalanyl-tRNA(Phe) + AMP + diphosphate + H(+). In Methanosarcina acetivorans (strain ATCC 35395 / DSM 2834 / JCM 12185 / C2A), this protein is Phenylalanine--tRNA ligase alpha subunit.